The primary structure comprises 174 residues: Eukaryotic translation elongation factor 1 epsilon-1 (174 aa).

Position 2 is an N-acetylalanine (alanine 2). The tract at residues 2-56 (AAAAELRLLEKSLGLKPGNKYSAQGERQIPVLQTNNGPSLMGLSTIATHLVKQAS) is N-terminal. Positions 50–173 (HLVKQASKEH…FIKNRLYANS (124 aa)) constitute a GST C-terminal domain. The linker stretch occupies residues 57 to 63 (KEHLLGS). The interval 64–152 (TAEEKAMVQQ…SRWFCHIQHY (89 aa)) is C-terminal. At lysine 138 the chain carries N6-acetyllysine. Residues 153-169 (PDIRQHLSSIVFIKNRL) adopt a coiled-coil conformation.

In terms of assembly, part of a multisubunit complex that groups tRNA ligases for Arg (RARS1), Asp (DARS1), Gln (QARS1), Ile (IARS1), Leu (LARS1), Lys (KARS1), Met (MARS1) the bifunctional ligase for Glu and Pro (EPRS1) and the auxiliary subunits AIMP1/p43, AIMP2/p38 and EEF1E1/p18. Can interact simultaneously with MARS1 and EPRS1. Forms a linear complex that contains MARS1, EEF1E1, EPRS1 and AIMP2 that is at the core of the multisubunit complex. Interacts with ATM and ATR. The interaction with ATM, which takes place independently of TP53, is induced by DNA damage that may occur during genotoxic stress or cell growth. The interaction with ATR is enhanced by UV irradiation.

It localises to the cytoplasm. It is found in the nucleus. Its function is as follows. Positive modulator of ATM response to DNA damage. This chain is Eukaryotic translation elongation factor 1 epsilon-1 (Eef1e1), found in Mus musculus (Mouse).